We begin with the raw amino-acid sequence, 282 residues long: tRNA N(3)-cytidine methyltransferase METTL6 (282 aa).

Residues Trp-45, Tyr-49, Gly-87, Asp-110, Asp-136, Leu-137, and Ile-157 each contribute to the S-adenosyl-L-methionine site.

It belongs to the methyltransferase superfamily. METL family. In terms of assembly, monomer. Interacts with SARS1/SerRS; interaction is mediated via tRNA(Ser) and is required for N(3)-methylcytidine methylation.

The protein resides in the cytoplasm. It localises to the nucleus. It carries out the reaction cytidine(32) in tRNA(Ser) + S-adenosyl-L-methionine = N(3)-methylcytidine(32) in tRNA(Ser) + S-adenosyl-L-homocysteine + H(+). In terms of biological role, S-adenosyl-L-methionine-dependent methyltransferase that mediates N(3)-methylcytidine modification of residue 32 of the tRNA anticodon loop of tRNA(Ser), including tRNA(Ser)(UGA) and tRNA(Ser)(GCU). Interaction with SARS1/SerRS is required for N(3)-methylcytidine methylation. The polypeptide is tRNA N(3)-cytidine methyltransferase METTL6 (METTL6) (Pongo abelii (Sumatran orangutan)).